A 200-amino-acid chain; its full sequence is Putative TLC domain-containing protein L438 (200 aa).

Positions 1 to 193 (MDYKQSNLFL…ILKILRAKLF (193 aa)) constitute a TLC domain. 6 consecutive transmembrane segments (helical) span residues 9–29 (FLFP…CGTF), 43–63 (THGI…LMIV), 74–94 (VHHF…YYLI), 96–116 (YLFA…AIKY), 131–151 (LAFF…LWFV), and 165–185 (YLIV…YRIL).

It localises to the membrane. The polypeptide is Putative TLC domain-containing protein L438 (Acanthamoeba polyphaga mimivirus (APMV)).